A 316-amino-acid polypeptide reads, in one-letter code: Putative transketolase C-terminal section (316 aa).

This sequence belongs to the transketolase family. Thiamine diphosphate serves as cofactor.

The catalysed reaction is D-sedoheptulose 7-phosphate + D-glyceraldehyde 3-phosphate = aldehydo-D-ribose 5-phosphate + D-xylulose 5-phosphate. This Methanocaldococcus jannaschii (strain ATCC 43067 / DSM 2661 / JAL-1 / JCM 10045 / NBRC 100440) (Methanococcus jannaschii) protein is Putative transketolase C-terminal section.